The following is a 450-amino-acid chain: Signal recognition particle protein (450 aa).

Residues 106 to 113 (GLQGSGKT), 188 to 192 (DTAGR), and 246 to 249 (TKLD) contribute to the GTP site.

Belongs to the GTP-binding SRP family. SRP54 subfamily. Part of the signal recognition particle protein translocation system, which is composed of SRP and FtsY.

The protein localises to the cytoplasm. The enzyme catalyses GTP + H2O = GDP + phosphate + H(+). Its function is as follows. Involved in targeting and insertion of nascent membrane proteins into the cytoplasmic membrane. Binds to the hydrophobic signal sequence of the ribosome-nascent chain (RNC) as it emerges from the ribosomes. The SRP-RNC complex is then targeted to the cytoplasmic membrane where it interacts with the SRP receptor FtsY. In Mycoplasma pneumoniae (strain ATCC 29342 / M129 / Subtype 1) (Mycoplasmoides pneumoniae), this protein is Signal recognition particle protein.